Here is a 369-residue protein sequence, read N- to C-terminus: UDP-N-acetylglucosamine--N-acetylmuramyl-(pentapeptide) pyrophosphoryl-undecaprenol N-acetylglucosamine transferase (369 aa).

Residues 10–12 (TAG), asparagine 124, arginine 166, serine 196, isoleucine 251, and glutamine 296 each bind UDP-N-acetyl-alpha-D-glucosamine.

It belongs to the glycosyltransferase 28 family. MurG subfamily.

It localises to the cell membrane. The catalysed reaction is di-trans,octa-cis-undecaprenyl diphospho-N-acetyl-alpha-D-muramoyl-L-alanyl-D-glutamyl-meso-2,6-diaminopimeloyl-D-alanyl-D-alanine + UDP-N-acetyl-alpha-D-glucosamine = di-trans,octa-cis-undecaprenyl diphospho-[N-acetyl-alpha-D-glucosaminyl-(1-&gt;4)]-N-acetyl-alpha-D-muramoyl-L-alanyl-D-glutamyl-meso-2,6-diaminopimeloyl-D-alanyl-D-alanine + UDP + H(+). It functions in the pathway cell wall biogenesis; peptidoglycan biosynthesis. Cell wall formation. Catalyzes the transfer of a GlcNAc subunit on undecaprenyl-pyrophosphoryl-MurNAc-pentapeptide (lipid intermediate I) to form undecaprenyl-pyrophosphoryl-MurNAc-(pentapeptide)GlcNAc (lipid intermediate II). The polypeptide is UDP-N-acetylglucosamine--N-acetylmuramyl-(pentapeptide) pyrophosphoryl-undecaprenol N-acetylglucosamine transferase (Acetivibrio thermocellus (strain ATCC 27405 / DSM 1237 / JCM 9322 / NBRC 103400 / NCIMB 10682 / NRRL B-4536 / VPI 7372) (Clostridium thermocellum)).